The primary structure comprises 26 residues: Muscarinic toxin-like protein 1 (26 aa).

This sequence belongs to the three-finger toxin family. Short-chain subfamily. Orphan group VIII (haditoxin) sub-subfamily. As to quaternary structure, homodimer; non-covalently linked. In terms of tissue distribution, expressed by the venom gland.

It is found in the secreted. In terms of biological role, antagonist of muscle and neuronal nicotinic acetylcholine receptors (nAChR) with highest affinity for neuronal alpha-7/CHRNA7 nAChRs. The protein is Muscarinic toxin-like protein 1 of Naja naja (Indian cobra).